The primary structure comprises 1000 residues: MSGYYNRQYSHFHGNNDRYQTGRYAYQENGNRYKGFQRNGSGNRRYSREGFGSQLRNNENESRPIRSQSRGISEIPRNPFATRPVVSAKYDRDEFNTKYHYYDIVSKRLRNESSFKKWKSEKIPEHGYVTTTELIASDKQKPILMARQPEQTSVDPRIRPMNGDAVSGSISAKKRYRKLRSALVRNSRIPYDSFYIGPEPPKEIIVYPSASNQQPIAAALSEAIIKNYFKSFGEIAHFEQFMDPNSALPLYVYLIKFTGPVSQPDAPYKAAYKASEKFKDAPYTVSGIKFNVILNQNTVLNSIKDKLIKQNAARVTEVNKAKRAIAEKSSGQKPQVIRGVPYDLTQVVNNRPVLFVPAKITFYHRFNAADFRYQLRKYNWAKIIDHYTGVYIVFHDLENAKACLEYESGALVINSHRTHSPIQIEFTFIEPKRRLQSNITNQRDINKPRKIEYSSTEELLEASTKQILKDLHNIIKRDILRRLVGPIIFDTLNPANYPEVVERQKKLDDEKKKREESQKKTTIKAKPAEFDIFSLYGPASKTKKLKRDRKADLGKRHLYTEESPDHQRKKKPKVEHMSHLLNDEISTREDTVDSLNVGSNGENSPESSGYESEDIISDESKKQSSVITTPEEDLPESAASLPDERSKELLQYEGKYKPIASEFPTPVYPYDDFDLNKSKQLSLDKFQLALKDEEDFSILKGIVSEKSKDITTDYTPFLPYSMWKLYQQIEQNGIIRDNQIALNEKEFDSTLASTTGSFIADGFKKIPDKLKSSYLLHHRRLAQPLNTVHNHQEQNFMALNGTESTNQEADLEQDNHNASSRLNRVFQRRFQQDIEAQRAAIGFESDLLSLNQLTKRKKPVTFARSAIHNWGLYALEPIAAKEMIIEYVGESIRQPVAEMREKRYIKSGIGSSYLFRIDENTVIDATKRGGIARFINHCCEPSCTAKIIKVDGRKRIVIYALRDIGTNEELTYDYKFERETDEGERLPCLCGAPSCKGFLN.

2 disordered regions span residues 29 to 78 and 543 to 644; these read NGNR…IPRN and KKLK…LPDE. 2 stretches are compositionally biased toward basic and acidic residues: residues 549–566 and 574–591; these read RKAD…SPDH and VEHM…REDT. A compositionally biased stretch (low complexity) spans 596–610; that stretch reads NVGSNGENSPESSGY. A RxxxRR motif motif is present at residues 824 to 829; it reads RVFQRR. The SET domain occupies 858 to 975; sequence KPVTFARSAI…TNEELTYDYK (118 aa). S-adenosyl-L-methionine is bound at residue Tyr974. Positions 984-1000 constitute a Post-SET domain; that stretch reads ERLPCLCGAPSCKGFLN.

The protein belongs to the class V-like SAM-binding methyltransferase superfamily. As to quaternary structure, component of the Set1C/COMPASS complex.

The protein resides in the nucleus. It is found in the chromosome. It catalyses the reaction L-lysyl(4)-[histone H3] + 3 S-adenosyl-L-methionine = N(6),N(6),N(6)-trimethyl-L-lysyl(4)-[histone H3] + 3 S-adenosyl-L-homocysteine + 3 H(+). The enzyme catalyses N(6)-methyl-L-lysyl(4)-[histone H3] + S-adenosyl-L-methionine = N(6),N(6)-dimethyl-L-lysyl(4)-[histone H3] + S-adenosyl-L-homocysteine + H(+). It carries out the reaction N(6),N(6)-dimethyl-L-lysyl(4)-[histone H3] + S-adenosyl-L-methionine = N(6),N(6),N(6)-trimethyl-L-lysyl(4)-[histone H3] + S-adenosyl-L-homocysteine + H(+). In terms of biological role, catalytic component of the COMPASS (Set1C) complex that specifically mono-, di- and trimethylates histone H3 to form H3K4me1/2/3. Binds RNAs which might negatively affect its histone methyltransferase activity. COMPASS recognizes ubiquitinated H2B on one face of the nucleosome which stimulates the methylation of H3 on the opposing face. This Kluyveromyces lactis (strain ATCC 8585 / CBS 2359 / DSM 70799 / NBRC 1267 / NRRL Y-1140 / WM37) (Yeast) protein is Histone-lysine N-methyltransferase, H3 lysine-4 specific (SET1).